A 178-amino-acid polypeptide reads, in one-letter code: ATP synthase subunit b, chloroplastic (178 aa).

The helical transmembrane segment at 34–50 (LAILTGGIFYLGSNALS) threads the bilayer.

Belongs to the ATPase B chain family. In terms of assembly, F-type ATPases have 2 components, F(1) - the catalytic core - and F(0) - the membrane proton channel. F(1) has five subunits: alpha(3), beta(3), gamma(1), delta(1), epsilon(1). F(0) has four main subunits: a(1), b(1), b'(1) and c(10-14). The alpha and beta chains form an alternating ring which encloses part of the gamma chain. F(1) is attached to F(0) by a central stalk formed by the gamma and epsilon chains, while a peripheral stalk is formed by the delta, b and b' chains.

It is found in the plastid. The protein localises to the chloroplast thylakoid membrane. Functionally, f(1)F(0) ATP synthase produces ATP from ADP in the presence of a proton or sodium gradient. F-type ATPases consist of two structural domains, F(1) containing the extramembraneous catalytic core and F(0) containing the membrane proton channel, linked together by a central stalk and a peripheral stalk. During catalysis, ATP synthesis in the catalytic domain of F(1) is coupled via a rotary mechanism of the central stalk subunits to proton translocation. Component of the F(0) channel, it forms part of the peripheral stalk, linking F(1) to F(0). In Ochrosphaera neapolitana, this protein is ATP synthase subunit b, chloroplastic.